A 225-amino-acid chain; its full sequence is Ribosomal RNA large subunit methyltransferase E (225 aa).

Residues Gly79, Trp81, Asp97, Asp113, and Asp137 each contribute to the S-adenosyl-L-methionine site. The active-site Proton acceptor is Lys177.

The protein belongs to the class I-like SAM-binding methyltransferase superfamily. RNA methyltransferase RlmE family.

It localises to the cytoplasm. It carries out the reaction uridine(2552) in 23S rRNA + S-adenosyl-L-methionine = 2'-O-methyluridine(2552) in 23S rRNA + S-adenosyl-L-homocysteine + H(+). Specifically methylates the uridine in position 2552 of 23S rRNA at the 2'-O position of the ribose in the fully assembled 50S ribosomal subunit. This Acidiphilium cryptum (strain JF-5) protein is Ribosomal RNA large subunit methyltransferase E.